The sequence spans 263 residues: Ribonuclease HII (263 aa).

The RNase H type-2 domain occupies 71–262 (QAIAGIDEVG…VKSMCCNSTN (192 aa)). Positions 77, 78, and 172 each coordinate a divalent metal cation.

This sequence belongs to the RNase HII family. Mn(2+) is required as a cofactor. Requires Mg(2+) as cofactor.

The protein localises to the cytoplasm. The catalysed reaction is Endonucleolytic cleavage to 5'-phosphomonoester.. Functionally, endonuclease that specifically degrades the RNA of RNA-DNA hybrids. The protein is Ribonuclease HII of Streptococcus pyogenes serotype M2 (strain MGAS10270).